The following is a 157-amino-acid chain: Small ribosomal subunit protein uS7 (157 aa).

The protein belongs to the universal ribosomal protein uS7 family. As to quaternary structure, part of the 30S ribosomal subunit. Contacts proteins S9 and S11.

Its function is as follows. One of the primary rRNA binding proteins, it binds directly to 16S rRNA where it nucleates assembly of the head domain of the 30S subunit. Is located at the subunit interface close to the decoding center, probably blocks exit of the E-site tRNA. This is Small ribosomal subunit protein uS7 from Francisella tularensis subsp. holarctica (strain OSU18).